The chain runs to 447 residues: FAD-dependent monooxygenase tropB (447 aa).

Residues 12–32 traverse the membrane as a helical segment; sequence PLSVGIVGGGIIGVILAAGLV. 3 residues coordinate FAD: Glu42, Ala55, and Arg124. A glycan (N-linked (GlcNAc...) asparagine) is linked at Asn153. Residues Arg206 and Tyr239 contribute to the active site. Asn243 carries N-linked (GlcNAc...) asparagine glycosylation. The FAD site is built by Asp322 and Ala335.

It belongs to the paxM FAD-dependent monooxygenase family. It depends on FAD as a cofactor.

The protein resides in the membrane. It participates in secondary metabolite biosynthesis. Functionally, FAD-dependent monooxygenase; part of the gene cluster that mediates the biosynthesis of the tropolone class of fungal maleic anhydrides. Within the pathway, tropB catalyzes a synthetically challenging asymmetric oxidative dearomatization reaction to convert 3-methylorcinaldehyde into a hydroxycyclohexadione. The pathway begins with the synthesis of 3-methylorcinaldehyde by the non-reducing polyketide synthase (PKS) tropA. 3-methylorcinaldehyde is the substrate for the FAD-dependent monooxygenase tropB to yield a dearomatized hydroxycyclohexadione. The 2-oxoglutarate-dependent dioxygenase tropC then performs the oxidative ring expansion to provide the first tropolone metabolite stipitaldehyde. Trop D converts stipitaldehyde into stipitacetal which is in turn converted to stipitalide by the short-chain dehydrogenase/reductase tropE. The next steps involve tropF, tropG, tropH, tropI and tropJ to form successive tropolone maleic anhydrides including stipitaldehydic, stipitatonic and stipitatic acids. The chain is FAD-dependent monooxygenase tropB from Talaromyces stipitatus (strain ATCC 10500 / CBS 375.48 / QM 6759 / NRRL 1006) (Penicillium stipitatum).